Reading from the N-terminus, the 364-residue chain is C3a anaphylatoxin chemotactic receptor (364 aa).

The Extracellular portion of the chain corresponds to 1–50 (MGDNMDFSEHYGNFSENYVTESYGEFDLYYDPLNETSLSEQGHRSIWVLS). Asn-13 and Asn-34 each carry an N-linked (GlcNAc...) asparagine glycan. Residues 51–71 (IVLCSIACVLGITGNAFVIWI) form a helical membrane-spanning segment. The Cytoplasmic portion of the chain corresponds to 72–82 (AGVKMKRTVNT). The helical transmembrane segment at 83–103 (IWFVNLAAADLLCCVSIPFSI) threads the bilayer. The Extracellular segment spans residues 104 to 120 (ADIILNSHWPYGEAMCK). A disulfide bridge connects residues Cys-119 and Cys-198. A helical membrane pass occupies residues 121–141 (ILPSMVVLNMFASVFTLVLIS). Residues 142-159 (LDRFALVILPVWAQNHRS) lie on the Cytoplasmic side of the membrane. The helical transmembrane segment at 160–180 (ITLAWLLCGLVWVLGLLLSLP) threads the bilayer. At 181-220 (SMIYREIVVHDDMNITLCIYNHLQDKTEGNQSAIKAIHVT) the chain is on the extracellular side. The helical transmembrane segment at 221–241 (RLILGFLIPLLVIAVCYLLIG) threads the bilayer. Over 242–256 (RRVSSGRFKSQRAFQ) the chain is Cytoplasmic. Residues 257 to 277 (IILVVVTTFFVCWLPYHVIGL) traverse the membrane as a helical segment. At 278 to 295 (VIEYGKEASQVMARALDP) the chain is on the extracellular side. A helical transmembrane segment spans residues 296–316 (LAISLAYVNSCLNPVLYVFMG). Residues 317–364 (QDFKERVRVSLRKIFEKVFSEDVTLRSSVYSKGQSQLSRATNSSEAQV) lie on the Cytoplasmic side of the membrane.

The protein belongs to the G-protein coupled receptor 1 family.

It is found in the cell membrane. In terms of biological role, receptor for the chemotactic and inflammatory peptide anaphylatoxin C3a. This receptor stimulates chemotaxis, granule enzyme release and superoxide anion production. This is C3a anaphylatoxin chemotactic receptor (c3ar1) from Oncorhynchus mykiss (Rainbow trout).